The primary structure comprises 586 residues: MTSFSLTFTSPLLPSSSTKPKRSVLVAAAQTTAPAESTASVDADRLEPRVELKDGFFILKEKFRKGINPQEKVKIEREPMKLFMENGIEELAKKSMEELDSEKSSKDDIDVRLKWLGLFHRRKHQYGKFMMRLKLPNGVTTSAQTRYLASVIRKYGEDGCADVTTRQNWQIRGVVLPDVPEILKGLASVGLTSLQSGMDNVRNPVGNPIAGIDPEEIVDTRPYTNLLSQFITANSQGNPDFTNLPRKWNVCVVGTHDLYEHPHINDLAYMPANKDGRFGFNLLVGGFFSPKRCEEAIPLDAWVPADDVLPLCKAVLEAYRDLGTRGNRQKTRMMWLIDELGVEGFRTEVEKRMPNGKLERGSSEDLVNKQWERRDYFGVNPQKQEGLSFVGLHVPVGRLQADDMDELARLADTYGSGELRLTVEQNIIIPNVETSKTEALLQEPFLKNRFSPEPSILMKGLVACTGSQFCGQAIIETKLRALKVTEEVERLVSVPRPIRMHWTGCPNTCGQVQVADIGFMGCLTRGEEGKPVEGADVYVGGRIGSDSHIGEIYKKGVRVTELVPLVAEILIKEFGAVPREREENED.

The segment covering 1–18 (MTSFSLTFTSPLLPSSST) has biased composition (low complexity). A disordered region spans residues 1-20 (MTSFSLTFTSPLLPSSSTKP). The N-terminal 25 residues, 1–25 (MTSFSLTFTSPLLPSSSTKPKRSVL), are a transit peptide targeting the chloroplast. K103 participates in a covalent cross-link: Glycyl lysine isopeptide (Lys-Gly) (interchain with G-Cter in ubiquitin). [4Fe-4S] cluster is bound by residues C464, C470, C505, and C509. C509 lines the siroheme pocket.

It belongs to the nitrite and sulfite reductase 4Fe-4S domain family. Monomer. Siroheme serves as cofactor. The cofactor is [4Fe-4S] cluster.

The protein localises to the plastid. It is found in the chloroplast. It carries out the reaction 6 oxidized [2Fe-2S]-[ferredoxin] + NH4(+) + 2 H2O = nitrite + 6 reduced [2Fe-2S]-[ferredoxin] + 8 H(+). The protein operates within nitrogen metabolism; nitrate reduction (assimilation). Catalyzes the six-electron reduction of nitrite to ammonium. This chain is Ferredoxin--nitrite reductase, chloroplastic (NIR1), found in Arabidopsis thaliana (Mouse-ear cress).